Here is a 214-residue protein sequence, read N- to C-terminus: MIRSTLIFREDGLPLCASVDDDTDPSLQEQKKKVKILISRFTPTSANEATVESGDFEIHYIRLNTVVYIVVAERNYPRNLAFSYLADIQQEFEHSYGGQLSKSNVRPYEFVSFDNFLQKTKKVYNDKRVQGNMDQLNQDLKGVKQIMTKNIEDLLYRGDSLDKMSDMSASLRQDAKKYRASAQKINFDLLISQYAPIAIIAFFFVFLLWWMFLR.

Over 1–192 the chain is Cytoplasmic; sequence MIRSTLIFRE…QKINFDLLIS (192 aa). The 112-residue stretch at 6–117 folds into the Longin domain; that stretch reads LIFREDGLPL…YEFVSFDNFL (112 aa). Residues 132 to 192 enclose the v-SNARE coiled-coil homology domain; it reads NMDQLNQDLK…QKINFDLLIS (61 aa). Residues 193-213 form a helical; Anchor for type IV membrane protein membrane-spanning segment; it reads QYAPIAIIAFFFVFLLWWMFL. Residue arginine 214 is a topological domain, vesicular.

This sequence belongs to the synaptobrevin family.

The protein localises to the membrane. Its subcellular location is the endoplasmic reticulum membrane. It localises to the golgi apparatus membrane. In terms of biological role, required for transport from the ER to the Golgi complex. The protein is Protein transport protein SEC22 (SEC22) of Kluyveromyces lactis (strain ATCC 8585 / CBS 2359 / DSM 70799 / NBRC 1267 / NRRL Y-1140 / WM37) (Yeast).